Reading from the N-terminus, the 102-residue chain is Small ribosomal subunit protein uS10 (102 aa).

The protein belongs to the universal ribosomal protein uS10 family. Part of the 30S ribosomal subunit.

Involved in the binding of tRNA to the ribosomes. The chain is Small ribosomal subunit protein uS10 from Methanothermobacter thermautotrophicus (strain ATCC 29096 / DSM 1053 / JCM 10044 / NBRC 100330 / Delta H) (Methanobacterium thermoautotrophicum).